A 378-amino-acid polypeptide reads, in one-letter code: 5-amino-6-(D-ribitylamino)uracil--L-tyrosine 4-hydroxyphenyl transferase (378 aa).

The 248-residue stretch at 59–306 (VTYVINRNIN…TAVARIYLGN (248 aa)) folds into the Radical SAM core domain. C73, C77, and C80 together coordinate [4Fe-4S] cluster.

Belongs to the radical SAM superfamily. CofH family. Consists of two subunits, CofG and CofH. The cofactor is [4Fe-4S] cluster.

The catalysed reaction is 5-amino-6-(D-ribitylamino)uracil + L-tyrosine + S-adenosyl-L-methionine = 5-amino-5-(4-hydroxybenzyl)-6-(D-ribitylimino)-5,6-dihydrouracil + 2-iminoacetate + 5'-deoxyadenosine + L-methionine + H(+). It participates in cofactor biosynthesis; coenzyme F0 biosynthesis. In terms of biological role, catalyzes the radical-mediated synthesis of 5-amino-5-(4-hydroxybenzyl)-6-(D-ribitylimino)-5,6-dihydrouracil from 5-amino-6-(D-ribitylamino)uracil and L-tyrosine. This chain is 5-amino-6-(D-ribitylamino)uracil--L-tyrosine 4-hydroxyphenyl transferase, found in Microcystis aeruginosa (strain NIES-843 / IAM M-2473).